Consider the following 66-residue polypeptide: DNA-directed RNA polymerase subunit Rpo10 (66 aa).

4 residues coordinate Zn(2+): C7, C10, C47, and C48.

This sequence belongs to the archaeal Rpo10/eukaryotic RPB10 RNA polymerase subunit family. In terms of assembly, part of the RNA polymerase complex. Requires Zn(2+) as cofactor.

Its subcellular location is the cytoplasm. The catalysed reaction is RNA(n) + a ribonucleoside 5'-triphosphate = RNA(n+1) + diphosphate. Its function is as follows. DNA-dependent RNA polymerase (RNAP) catalyzes the transcription of DNA into RNA using the four ribonucleoside triphosphates as substrates. The sequence is that of DNA-directed RNA polymerase subunit Rpo10 from Haloarcula marismortui (strain ATCC 43049 / DSM 3752 / JCM 8966 / VKM B-1809) (Halobacterium marismortui).